Here is a 74-residue protein sequence, read N- to C-terminus: Anaphase-promoting complex subunit 13 (74 aa).

Positions 33–56 (LSELPEPEQDNGGTTESVKEQEMK) are disordered.

It belongs to the APC13 family. As to quaternary structure, the mammalian APC/C is composed at least of 14 distinct subunits ANAPC1, ANAPC2, CDC27/APC3, ANAPC4, ANAPC5, CDC16/APC6, ANAPC7, CDC23/APC8, ANAPC10, ANAPC11, CDC26/APC12, ANAPC13, ANAPC15 and ANAPC16 that assemble into a complex of at least 19 chains with a combined molecular mass of around 1.2 MDa; APC/C interacts with FZR1 and FBXO5.

It is found in the nucleus. Its pathway is protein modification; protein ubiquitination. Its function is as follows. Component of the anaphase promoting complex/cyclosome (APC/C), a cell cycle-regulated E3 ubiquitin ligase that controls progression through mitosis and the G1 phase of the cell cycle. The APC/C complex acts by mediating ubiquitination and subsequent degradation of target proteins: it mainly mediates the formation of 'Lys-11'-linked polyubiquitin chains and, to a lower extent, the formation of 'Lys-48'- and 'Lys-63'-linked polyubiquitin chains. The APC/C complex catalyzes assembly of branched 'Lys-11'-/'Lys-48'-linked branched ubiquitin chains on target proteins. The sequence is that of Anaphase-promoting complex subunit 13 (Anapc13) from Mus musculus (Mouse).